Here is a 358-residue protein sequence, read N- to C-terminus: Fructose-bisphosphate aldolase 7, cytosolic (358 aa).

N-acetylserine is present on Ser2. Arg52 contacts substrate. Residue Cys68 is modified to S-glutathionyl cysteine; transient. Lys142 provides a ligand contact to substrate. The residue at position 173 (Cys173) is an S-glutathionyl cysteine; transient; alternate. Cys173 bears the S-nitrosocysteine; transient; alternate mark. Glu183 functions as the Proton acceptor in the catalytic mechanism. Lys225 (schiff-base intermediate with dihydroxyacetone-P) is an active-site residue. Residue 266–268 (SGI) coordinates substrate.

Belongs to the class I fructose-bisphosphate aldolase family. As to quaternary structure, homotetramer. S-glutathionylated at Cys-68 and Cys-173. Post-translationally, S-nitrosylated at Cys-173. Highly expressed in flowers, and at lower levels in rosettes leaves and cauline leaves.

The protein resides in the cytoplasm. The protein localises to the cytosol. It carries out the reaction beta-D-fructose 1,6-bisphosphate = D-glyceraldehyde 3-phosphate + dihydroxyacetone phosphate. It participates in carbohydrate degradation; glycolysis; D-glyceraldehyde 3-phosphate and glycerone phosphate from D-glucose: step 4/4. In terms of biological role, plays a key role in glycolysis and gluconeogenesis. This is Fructose-bisphosphate aldolase 7, cytosolic from Arabidopsis thaliana (Mouse-ear cress).